A 388-amino-acid chain; its full sequence is MRYLTAGESHGPRLTAIIEGVPAGLPLTAEDINGDLKRRQGGYGRGGRMKIESDKVEITSGVRHGKTTGAPITLHVINKDHQKWLDIMAVEDIEDRLKTKRKITHPRPGHADLVGGMKYRFDDLRNSLERSSARETTMRVAVGAVAKRILAELDIEIANHVVVFGGKEIDVPENLTVAQIKELAQQSEISVVNQEREQEIKDYIDQIKKEGDTIGGVVETVVGGVPVGLGSYVQWDTKLDAKIAQAVVSINAFKGVEFGLGFKDGYLRGSQVMDEILWNEEDGYTRRTNNLGGFEGGMTNGQPIVVRGVMKPIPTLYKPLMSVDIETHEPYKATVERSDPTALPAAGVVMESVVATVVANEILDKFSSDNLEELKEAVAHHRDYVKNF.

NADP(+)-binding residues include arginine 39 and arginine 45. FMN contacts are provided by residues 130–132 (RSS), 251–252 (NA), glycine 296, 311–315 (KPIPT), and arginine 337.

It belongs to the chorismate synthase family. As to quaternary structure, homotetramer. FMNH2 is required as a cofactor.

The enzyme catalyses 5-O-(1-carboxyvinyl)-3-phosphoshikimate = chorismate + phosphate. It participates in metabolic intermediate biosynthesis; chorismate biosynthesis; chorismate from D-erythrose 4-phosphate and phosphoenolpyruvate: step 7/7. Its function is as follows. Catalyzes the anti-1,4-elimination of the C-3 phosphate and the C-6 proR hydrogen from 5-enolpyruvylshikimate-3-phosphate (EPSP) to yield chorismate, which is the branch point compound that serves as the starting substrate for the three terminal pathways of aromatic amino acid biosynthesis. This reaction introduces a second double bond into the aromatic ring system. This chain is Chorismate synthase, found in Streptococcus thermophilus (strain CNRZ 1066).